We begin with the raw amino-acid sequence, 195 residues long: IMP cyclohydrolase (195 aa).

It belongs to the archaeal IMP cyclohydrolase family.

The catalysed reaction is IMP + H2O = 5-formamido-1-(5-phospho-D-ribosyl)imidazole-4-carboxamide. It participates in purine metabolism; IMP biosynthesis via de novo pathway; IMP from 5-formamido-1-(5-phospho-D-ribosyl)imidazole-4-carboxamide: step 1/1. In terms of biological role, catalyzes the cyclization of 5-formylamidoimidazole-4-carboxamide ribonucleotide to IMP. The chain is IMP cyclohydrolase from Haloquadratum walsbyi (strain DSM 16790 / HBSQ001).